The sequence spans 312 residues: 4-hydroxy-3-methylbut-2-enyl diphosphate reductase (312 aa).

Position 15 (Cys15) interacts with [4Fe-4S] cluster. Residues His44 and His77 each coordinate (2E)-4-hydroxy-3-methylbut-2-enyl diphosphate. 2 residues coordinate dimethylallyl diphosphate: His44 and His77. 2 residues coordinate isopentenyl diphosphate: His44 and His77. Cys99 contacts [4Fe-4S] cluster. A (2E)-4-hydroxy-3-methylbut-2-enyl diphosphate-binding site is contributed by His127. Residue His127 participates in dimethylallyl diphosphate binding. His127 is an isopentenyl diphosphate binding site. The Proton donor role is filled by Glu129. Thr167 is a (2E)-4-hydroxy-3-methylbut-2-enyl diphosphate binding site. Residue Cys197 coordinates [4Fe-4S] cluster. The (2E)-4-hydroxy-3-methylbut-2-enyl diphosphate site is built by Ser225, Ser226, Asn227, and Ser269. 4 residues coordinate dimethylallyl diphosphate: Ser225, Ser226, Asn227, and Ser269. Isopentenyl diphosphate is bound by residues Ser225, Ser226, Asn227, and Ser269.

Belongs to the IspH family. Requires [4Fe-4S] cluster as cofactor.

It catalyses the reaction isopentenyl diphosphate + 2 oxidized [2Fe-2S]-[ferredoxin] + H2O = (2E)-4-hydroxy-3-methylbut-2-enyl diphosphate + 2 reduced [2Fe-2S]-[ferredoxin] + 2 H(+). It carries out the reaction dimethylallyl diphosphate + 2 oxidized [2Fe-2S]-[ferredoxin] + H2O = (2E)-4-hydroxy-3-methylbut-2-enyl diphosphate + 2 reduced [2Fe-2S]-[ferredoxin] + 2 H(+). It participates in isoprenoid biosynthesis; dimethylallyl diphosphate biosynthesis; dimethylallyl diphosphate from (2E)-4-hydroxy-3-methylbutenyl diphosphate: step 1/1. Its pathway is isoprenoid biosynthesis; isopentenyl diphosphate biosynthesis via DXP pathway; isopentenyl diphosphate from 1-deoxy-D-xylulose 5-phosphate: step 6/6. Its function is as follows. Catalyzes the conversion of 1-hydroxy-2-methyl-2-(E)-butenyl 4-diphosphate (HMBPP) into a mixture of isopentenyl diphosphate (IPP) and dimethylallyl diphosphate (DMAPP). Acts in the terminal step of the DOXP/MEP pathway for isoprenoid precursor biosynthesis. This Azoarcus sp. (strain BH72) protein is 4-hydroxy-3-methylbut-2-enyl diphosphate reductase.